The sequence spans 379 residues: Leukocyte elastase inhibitor (379 aa).

N-acetylmethionine is present on Met1. 2 positions are modified to N6-acetyllysine: Lys137 and Lys177. The residue at position 300 (Ser300) is a Phosphoserine. The interval 351–379 (NFTADHPFLFFIRHNSSGSILFLGRFSSP) is CARD-binding motif (CBM).

The protein belongs to the serpin family. Ov-serpin subfamily. In terms of assembly, monomer. Interacts (via C-terminus) with CASP1; CASP4 (via CARD domain) and CASP5; these interactions regulate the activity of inflammatory caspases. Interacts with PRTN3. Interacts with GZMH. As to expression, in human bone marrow, present in all CD45+ populations. Expression levels are highest in the neutrophil lineage, intermediate in monocytic, and lowest in lymphocytic lineage. Within the neutrophil lineage, expression is highest in promyelocytes.

Its subcellular location is the secreted. The protein localises to the cytoplasm. It localises to the cytolytic granule. The protein resides in the early endosome. In terms of biological role, neutrophil serine protease inhibitor that plays an essential role in the regulation of the innate immune response, inflammation and cellular homeostasis. Acts primarily to protect the cell from proteases released in the cytoplasm during stress or infection. These proteases are important in killing microbes but when released from granules, these potent enzymes also destroy host proteins and contribute to mortality. Regulates the activity of the neutrophil proteases elastase, cathepsin G, proteinase-3, chymase, chymotrypsin, and kallikrein-3. Also acts as a potent intracellular inhibitor of GZMH by directly blocking its proteolytic activity. During inflammation, limits the activity of inflammatory caspases CASP1, CASP4 and CASP5 by suppressing their caspase-recruitment domain (CARD) oligomerization and enzymatic activation. When secreted, promotes the proliferation of beta-cells via its protease inhibitory function. This is Leukocyte elastase inhibitor (SERPINB1) from Homo sapiens (Human).